A 307-amino-acid polypeptide reads, in one-letter code: MSENQQALNHVVSMEDLTVDQVMKLIKRGIEFKNGAQLPYEDHPIVSNLFFEDSTRTHKSFEVAEIKLGLERLDFDVKTSSVNKGETLYDTILTLSALGVDVCVIRHPEVDYYRELIASPTITTSIINGGDGSGQHPSQSLLDLMTIYEEFGHFEGLKVAIAGDLDHSRVAKSNMQILKRLGAELFFAGPEEWRSQEFADYGKFVTIDEIIDQVDVMMFLRVQHERHDSGAVFSKEDYHAQHGLTQERYDRLKETAILMHPAPINRDVEIADHLVEAPKSRIVQQMTNGVFVRMAILESVLASRNAN.

Carbamoyl phosphate contacts are provided by Arg56 and Thr57. Residue Lys84 participates in L-aspartate binding. Arg106, His136, and Gln139 together coordinate carbamoyl phosphate. Residues Arg169 and Arg221 each coordinate L-aspartate. Residues Ala262 and Pro263 each contribute to the carbamoyl phosphate site.

It belongs to the aspartate/ornithine carbamoyltransferase superfamily. ATCase family. As to quaternary structure, heterododecamer (2C3:3R2) of six catalytic PyrB chains organized as two trimers (C3), and six regulatory PyrI chains organized as three dimers (R2).

The catalysed reaction is carbamoyl phosphate + L-aspartate = N-carbamoyl-L-aspartate + phosphate + H(+). It functions in the pathway pyrimidine metabolism; UMP biosynthesis via de novo pathway; (S)-dihydroorotate from bicarbonate: step 2/3. Catalyzes the condensation of carbamoyl phosphate and aspartate to form carbamoyl aspartate and inorganic phosphate, the committed step in the de novo pyrimidine nucleotide biosynthesis pathway. The protein is Aspartate carbamoyltransferase catalytic subunit of Streptococcus pneumoniae (strain 70585).